The chain runs to 593 residues: FAD-binding monooxygenase acrE (593 aa).

FAD contacts are provided by residues 61 to 64 (TWRF), 73 to 74 (DS), and tyrosine 79. Residue 71–73 (RVD) participates in NADP(+) binding. Residues 200–206 (TGASGVQ) and 223–224 (RS) each bind NADP(+).

The protein belongs to the FAD-binding monooxygenase family. The cofactor is FAD.

The protein operates within secondary metabolite biosynthesis. Functionally, FAD-binding monooxygenase; part of the cluster that mediates the biosynthesis of acurin A, a highly reduced polyketide coupled to a serine via a peptide bond. The activities of the highly reducing polyketide synthase acrA and the nonribosomal peptide synthetase acrB are collectively responsible for the synthesis of the acurin A core structure with a heptaketide backbone produced by acrA covalently fused to a L-serine by acrB. After the formation of the PK-NRP hybrid product, it is detached from acrB by reductive release to set up the formation of the lactam ring by aldol condensation. The hydrolyase acrC then catalyzes water loss to generate a double bond in the ring. This double bond is probably reduced, which is followed by three oxidations at C-22 to generate the carboxylic acid moiety, involving probably the FAD-binding monooxygenase acrE and the cytochrome P450 monooxygenases acrD and acrF. Finally, a last methylation step performed by the O-methyltransferase acrG leads to the production of acurin A. This Aspergillus aculeatus (strain ATCC 16872 / CBS 172.66 / WB 5094) protein is FAD-binding monooxygenase acrE.